We begin with the raw amino-acid sequence, 614 residues long: Zinc finger protein ztf-7 (614 aa).

Residues 1–10 (MSTSGSGGGN) show a composition bias toward gly residues. A disordered region spans residues 1-160 (MSTSGSGGGN…SRPKKPEKMS (160 aa)). Polar residues predominate over residues 18 to 41 (NVASSPNANPKKNADTESSGGSKN). Over residues 54 to 69 (GSNSRNGSRTNSVSNS) the composition is skewed to low complexity. The span at 74-83 (NRKDWTDRKS) shows a compositional bias: basic and acidic residues. Over residues 132 to 150 (DYSDEYELDEPFSDSDDED) the composition is skewed to acidic residues. C2H2-type zinc fingers lie at residues 356 to 380 (NECI…KRNH) and 447 to 470 (VVCL…KTTH).

Belongs to the ZNF277 family. As to quaternary structure, interacts with rps-2.

It localises to the cytoplasm. Functionally, probable transcription factor. Limits the ability to tolerate cold environment or cold-warm stress. In complex with rps-2, mediates the cold-warm shock response by promoting translocation of components of the RNA exosome from the nucleolus to nucleoplasm. The chain is Zinc finger protein ztf-7 from Caenorhabditis elegans.